Reading from the N-terminus, the 333-residue chain is MQFIDLAEIHVKAGKGGDGIIAFRREKYVPAGGPSGGNGGNGGSVILKAVSNLQTLLDFRYAHVFKAENGQRGGPNNRTGACGADLVIEVPCGTMVWDAETGELLGDLTTPGQTLLVAKGGKGGLGNKHFLSNHQRAPDYALPGLEGEERHLRLELKLLAEVGIIGLPNAGKSTLISVLSAARPKIADYPFTTLVPNLGVVRQPNGDGTVFADIPGLIAGAHTGLGLGHEFLRHIERTRLLLHLIDATAEDVVAAYQTIRDELVAYGHGLGDRPQIVALNKIDALDASQITTLQETLAAYVGQRVFAISAVARQGLEPLLEAVWQELGVSVSH.

Residues 1-159 form the Obg domain; that stretch reads MQFIDLAEIH…RHLRLELKLL (159 aa). In terms of domain architecture, OBG-type G spans 160-328; it reads AEVGIIGLPN…LLEAVWQELG (169 aa). GTP-binding positions include 166–173, 191–195, 213–216, 280–283, and 309–311; these read GLPNAGKS, FTTLV, DIPG, NKID, and SAV. Mg(2+) is bound by residues serine 173 and threonine 193.

This sequence belongs to the TRAFAC class OBG-HflX-like GTPase superfamily. OBG GTPase family. In terms of assembly, monomer. Mg(2+) is required as a cofactor.

The protein resides in the cytoplasm. An essential GTPase which binds GTP, GDP and possibly (p)ppGpp with moderate affinity, with high nucleotide exchange rates and a fairly low GTP hydrolysis rate. Plays a role in control of the cell cycle, stress response, ribosome biogenesis and in those bacteria that undergo differentiation, in morphogenesis control. This is GTPase Obg from Thermosynechococcus vestitus (strain NIES-2133 / IAM M-273 / BP-1).